The primary structure comprises 122 residues: Large ribosomal subunit protein uL14 (122 aa).

This sequence belongs to the universal ribosomal protein uL14 family. As to quaternary structure, part of the 50S ribosomal subunit. Forms a cluster with proteins L3 and L19. In the 70S ribosome, L14 and L19 interact and together make contacts with the 16S rRNA in bridges B5 and B8.

Binds to 23S rRNA. Forms part of two intersubunit bridges in the 70S ribosome. The chain is Large ribosomal subunit protein uL14 from Flavobacterium johnsoniae (strain ATCC 17061 / DSM 2064 / JCM 8514 / BCRC 14874 / CCUG 350202 / NBRC 14942 / NCIMB 11054 / UW101) (Cytophaga johnsonae).